The primary structure comprises 213 residues: Ethylene-responsive transcription factor WIN1 (213 aa).

A DNA-binding region (AP2/ERF) is located at residues 15–72 (KFRGVRQRHWGSWVSEIRHPLLKRRVWLGTFETAEEAARAYDEAAVLMSGRNAKTNFP). Polar residues predominate over residues 70-80 (NFPIQRSSTGE). Disordered regions lie at residues 70-99 (NFPI…GSST) and 159-213 (ASTD…RFII). Low complexity predominate over residues 159–174 (ASTDAASQSTSATTAP).

This sequence belongs to the AP2/ERF transcription factor family. ERF subfamily. Mostly expressed in roots, stems and anthers, and, to a lower extent, in leaves, seeds and silks.

The protein localises to the nucleus. Functionally, promotes cuticle formation by inducing the expression of enzymes involved in wax biosynthesis, particularly promoting very-long-chain waxes formation. Confers drought resistance. Acts as a transcriptional activator binding directly to promoter regions of CER2, CER3.2 and KCS1, wax biosynthesis-related genes. Binds to the GCC-box pathogenesis-related promoter element. May be involved in the regulation of gene expression by stress factors and by components of stress signal transduction pathways. The chain is Ethylene-responsive transcription factor WIN1 from Zea mays (Maize).